Here is a 196-residue protein sequence, read N- to C-terminus: Na(+)-translocating ferredoxin:NAD(+) oxidoreductase complex subunit E (196 aa).

5 helical membrane-spanning segments follow: residues 38 to 58 (MGMG…ISAL), 68 to 88 (IPAF…LMKA), 92 to 112 (ALDA…IILA), 127 to 147 (FADA…LGSI), and 169 to 189 (VLLM…IGLI).

Belongs to the NqrDE/RnfAE family. In terms of assembly, the complex is composed of six subunits: RnfA, RnfB, RnfC, RnfD, RnfE and RnfG.

It localises to the cell membrane. It catalyses the reaction 2 reduced [2Fe-2S]-[ferredoxin] + Na(+)(in) + NAD(+) + H(+) = 2 oxidized [2Fe-2S]-[ferredoxin] + Na(+)(out) + NADH. Part of a membrane-bound complex that couples electron transfer with translocation of ions across the membrane. Couples electron transfer from reduced ferredoxin to NAD(+) with electrogenic movement of Na(+) out of the cell. Involved in caffeate respiration. In Acetobacterium woodii (strain ATCC 29683 / DSM 1030 / JCM 2381 / KCTC 1655 / WB1), this protein is Na(+)-translocating ferredoxin:NAD(+) oxidoreductase complex subunit E.